A 61-amino-acid polypeptide reads, in one-letter code: Small ribosomal subunit protein uS14 (61 aa).

Zn(2+) is bound by residues C24, C27, C40, and C43.

Belongs to the universal ribosomal protein uS14 family. Zinc-binding uS14 subfamily. As to quaternary structure, part of the 30S ribosomal subunit. Contacts proteins S3 and S10. Zn(2+) serves as cofactor.

Binds 16S rRNA, required for the assembly of 30S particles and may also be responsible for determining the conformation of the 16S rRNA at the A site. This Aliarcobacter butzleri (strain RM4018) (Arcobacter butzleri) protein is Small ribosomal subunit protein uS14.